The following is a 142-amino-acid chain: Hemoglobin subunit alpha-A (142 aa).

One can recognise a Globin domain in the interval 2–142 (VLSAADKNNV…VGTVLTAKYR (141 aa)). An O2-binding site is contributed by histidine 59. A heme b-binding site is contributed by histidine 88.

The protein belongs to the globin family. In terms of assembly, heterotetramer of two alpha chains and two beta chains. As to expression, red blood cells.

Functionally, involved in oxygen transport from the lung to the various peripheral tissues. This is Hemoglobin subunit alpha-A (HBAA) from Meleagris gallopavo (Wild turkey).